Here is a 1431-residue protein sequence, read N- to C-terminus: DNA polymerase II large subunit (1431 aa).

The segment at 1388–1431 (LLENFANGYNKGKKEEMPKKQRKKEQEKSKKRKVISLDDFFSRK) is disordered. The segment covering 1399–1415 (GKKEEMPKKQRKKEQEK) has biased composition (basic and acidic residues).

This sequence belongs to the archaeal DNA polymerase II family. In terms of assembly, heterodimer of a large subunit and a small subunit. This protein undergoes a protein self splicing that involves a post-translational excision of the intervening region (intein) followed by peptide ligation.

It catalyses the reaction DNA(n) + a 2'-deoxyribonucleoside 5'-triphosphate = DNA(n+1) + diphosphate. The enzyme catalyses Exonucleolytic cleavage in the 3'- to 5'-direction to yield nucleoside 5'-phosphates.. Its function is as follows. Possesses two activities: a DNA synthesis (polymerase) and an exonucleolytic activity that degrades single-stranded DNA in the 3'- to 5'-direction. Has a template-primer preference which is characteristic of a replicative DNA polymerase. In Pyrococcus horikoshii (strain ATCC 700860 / DSM 12428 / JCM 9974 / NBRC 100139 / OT-3), this protein is DNA polymerase II large subunit (polC).